The sequence spans 766 residues: MSSVVRPPDPCLVAIILITCSRAGPRFVYHYPPNPSIASAPSRSNSRTKPSPRASDSSPSSDNEEGSSSDEDDLSQTPRIGSPRPTNVRRLSSGSPSTKAASQQRKSNLGGSELDDTETPRDGRRSERSHELENPPWDSFLGLGTDVWEKLLCPSSSWHKRRFEVGVNDLTFVGWPVFVREDGTWRKKRKKKKTRAGDSVLDTAPTLGSEKGGYADGGEKLESERDPNVDGRSDKDEEPSRSLIESHPDEDGSVTDGTKDAMTMFNVVFVMNPPILEHNLRIKENYDNVIKKFGKGLKSEQATANYVWKEAQKILHIKEKGRENKSSLSSVYEELLSQSSLAQAIATIYRSISTSKIASITLTPHTTMSLQIPPLTSTPYLPGPMEPAYPGLWLTTADSLSATDEVTEMEYSGPSKVLAKHFALLLLSDEASILKDIEASMGTLGPPLAHYIRSSKPTKSFAQISARSSIPLNDIQVLAAHLIYWRRARAVPPLNKQDTYIVSPNCDLSKLGLATAAYELAFPTMPSLPKMLAVLSGTPRPYASFIPSRDHKGIYYDILAWLMRGGWVTQLRTFGWIKVDQELKSAVEEALASEEAKEREEELASSTATVIRVNEPQTDDGASTSSSSLDSEHSNATPVQERFAHFQGHQKGHDPAQISSLILRPHRASPLEARWLDEIISRFPDDHLADRANESEDFEGEVSIHRYWNAFTKYFNGTDALEKIPVREGLSRKLVWRLLSRIDISSNPADGEVHRNEKVLVTVRHW.

A signal peptide spans 1 to 23; the sequence is MSSVVRPPDPCLVAIILITCSRA. Disordered regions lie at residues 33–140, 186–257, and 594–638; these read PNPS…WDSF, RKKR…VTDG, and EEAK…NATP. Positions 36–49 are enriched in polar residues; it reads SIASAPSRSNSRTK. Residues 51–61 show a composition bias toward low complexity; that stretch reads SPRASDSSPSS. The span at 62 to 74 shows a compositional bias: acidic residues; sequence DNEEGSSSDEDDL. A compositionally biased stretch (polar residues) spans 89 to 110; sequence RRLSSGSPSTKAASQQRKSNLG. Composition is skewed to basic and acidic residues over residues 118–133 and 217–250; these read ETPR…HELE and GGEK…HPDE.

This sequence belongs to the NPR3 family.

Functionally, mediates inactivation of the TORC1 complex in response to amino acid starvation. Required for meiotic nuclear division. This Coccidioides immitis (strain RS) (Valley fever fungus) protein is Nitrogen permease regulator 3 (NPR3).